A 276-amino-acid chain; its full sequence is uncharacterized protein (276 aa).

In terms of domain architecture, AB hydrolase-1 spans 20–137 (PVLIFIPGAN…PPINTFLPDS (118 aa)). A disordered region spans residues 57–76 (GESELTEPLPDSASNPDSDY).

It belongs to the AB hydrolase superfamily.

This is an uncharacterized protein from Staphylococcus aureus (strain N315).